The sequence spans 186 residues: ADP-ribosylation factor-like protein 8 (186 aa).

Residues Met1 to Glu19 constitute an intramembrane region (note=Mediates targeting to membranes). Residues Gln29–Thr35, Asp71–Gln75, and Asn130–Asp133 contribute to the GTP site.

The protein belongs to the small GTPase superfamily. Arf family. As to quaternary structure, interacts with tubulin. Interacts (in GTP-bound form) with Rilpl. Interacts with unc-104. In terms of tissue distribution, expressed throughout development, from embryo to adult stage, in different tissues such as larval motor neurons, salivary glands, testis and ovaries (at protein level).

Its subcellular location is the lysosome membrane. The protein localises to the synapse. It localises to the cell projection. It is found in the axon. The protein resides in the perikaryon. Required for normal functioning of the late endocytic pathway including lysosome motility and late endosome-lysosome fusion. Not required for the delivery of lysosomal membrane protein-containing vesicles to late endosomes. In larval motor neurons, mediates the anterograde axonal long-range transport of presynaptic lysosome-related vesicles required for presynaptic biogenesis and synaptic function. Acts downstream of Rab2 during presynaptic precursor vesicle biogenesis. Essential role in chromosome segregation. The sequence is that of ADP-ribosylation factor-like protein 8 from Drosophila melanogaster (Fruit fly).